We begin with the raw amino-acid sequence, 349 residues long: uncharacterized protein (349 aa).

The N-terminal stretch at 1–26 is a signal peptide; sequence MQSHAGGSRAPLGLLLICLCLPGLFA. 2 disordered regions span residues 30–113 and 322–349; these read GAPE…QGMA and YPAG…GITP. The segment covering 39–52 has biased composition (polar residues); the sequence is HSGQPSFTSLLNPG. The segment covering 90–101 has biased composition (pro residues); the sequence is NGPPFWGPPPME.

As to quaternary structure, binds to numerous extracellular matrix proteins.

It is found in the secreted. The protein localises to the extracellular space. It localises to the extracellular matrix. This is an uncharacterized protein from Mus musculus (Mouse).